A 503-amino-acid polypeptide reads, in one-letter code: MTDLPAQLERVHMVGIGGAGMSGIARILLARGGQVSGSDAKESRGVLALRARGAQVRIGHDAGALDLLPGGPTVVVTTHAAIPKDNPELVEAARRGIPVILRPAVLASLMQGHRTLLVSGTHGKTSTTSMLVVALQHCGFDPSFAVGGELNEAGTNAHHGSGDVFVAEADESDGSLLQYDPNVVVVTNVEADHLDYFGSPEAYIQVFDDFAARLSHGGLLVACLDDPGSAALAQRVAARGLPGVRVLGYGSAEDADGAFAPIDGVEVGARLLSFEARDVGGVLQFQLAGEQAPRTIRMNVPGRHMALNALAALLAAREAGADVDEILEGIAGFGGVHRRFQFTGREHGVRVFDDYAHHPTEVRAVLGAAADLVSQPHEADRRESEEPVRSGKVIVVFQPHLYSRTATFAEEFGHALDLADEVMVLDVYGAREEPLPGVSGALVALSVSKPVHYQPDLSQAPRQVAALASPGDVVITMGAGDVTMLGNQILDALRAAPHHHPSR.

120 to 126 (GTHGKTS) is a binding site for ATP.

The protein belongs to the MurCDEF family.

It is found in the cytoplasm. The catalysed reaction is UDP-N-acetyl-alpha-D-muramate + L-alanine + ATP = UDP-N-acetyl-alpha-D-muramoyl-L-alanine + ADP + phosphate + H(+). It participates in cell wall biogenesis; peptidoglycan biosynthesis. Cell wall formation. This chain is UDP-N-acetylmuramate--L-alanine ligase, found in Rhodococcus opacus (strain B4).